Consider the following 563-residue polypeptide: Arginine--tRNA ligase (563 aa).

A 'HIGH' region motif is present at residues 121–131 (PNIAKPFSIGH).

This sequence belongs to the class-I aminoacyl-tRNA synthetase family. In terms of assembly, monomer.

Its subcellular location is the cytoplasm. The enzyme catalyses tRNA(Arg) + L-arginine + ATP = L-arginyl-tRNA(Arg) + AMP + diphosphate. In Streptococcus pyogenes serotype M1, this protein is Arginine--tRNA ligase.